The following is a 471-amino-acid chain: Ribulose bisphosphate carboxylase large chain (471 aa).

Lys-5 is subject to N6,N6,N6-trimethyllysine. 2 residues coordinate substrate: Asn-114 and Thr-164. Lys-166 serves as the catalytic Proton acceptor. Lys-168 lines the substrate pocket. The Mg(2+) site is built by Lys-192, Asp-194, and Glu-195. Lys-192 bears the N6-carboxylysine mark. His-285 functions as the Proton acceptor in the catalytic mechanism. 3 residues coordinate substrate: Arg-286, His-318, and Ser-370.

This sequence belongs to the RuBisCO large chain family. Type I subfamily. Heterohexadecamer of 8 large chains and 8 small chains; disulfide-linked. The disulfide link is formed within the large subunit homodimers. It depends on Mg(2+) as a cofactor. Post-translationally, the disulfide bond which can form in the large chain dimeric partners within the hexadecamer appears to be associated with oxidative stress and protein turnover.

It localises to the plastid. It is found in the chloroplast. It catalyses the reaction 2 (2R)-3-phosphoglycerate + 2 H(+) = D-ribulose 1,5-bisphosphate + CO2 + H2O. The enzyme catalyses D-ribulose 1,5-bisphosphate + O2 = 2-phosphoglycolate + (2R)-3-phosphoglycerate + 2 H(+). RuBisCO catalyzes two reactions: the carboxylation of D-ribulose 1,5-bisphosphate, the primary event in carbon dioxide fixation, as well as the oxidative fragmentation of the pentose substrate in the photorespiration process. Both reactions occur simultaneously and in competition at the same active site. This is Ribulose bisphosphate carboxylase large chain from Chiococca alba (West Indian milkberry).